Here is a 147-residue protein sequence, read N- to C-terminus: T-DNA border endonuclease VirD1 (147 aa).

In terms of biological role, tumor formation by A.tumefaciens involves the transfer and integration of a defined segment (T-DNA) of Ti plasmid DNA into the plant nuclear genome. The virD operon encodes a site-specific endonuclease that cleaves at a unique site within both 24 bp direct repeats flanking the T-DNA. The chain is T-DNA border endonuclease VirD1 (virD1) from Rhizobium radiobacter (Agrobacterium tumefaciens).